The primary structure comprises 614 residues: UvrABC system protein C (614 aa).

In terms of domain architecture, GIY-YIG spans 16–94; the sequence is SRPGVYRMFG…VKSLKPRFNV (79 aa). Residues 204-239 form the UVR domain; sequence GELQKRLASEMEAASEAMEFETAARLRDRIRAIAHV.

Belongs to the UvrC family. As to quaternary structure, interacts with UvrB in an incision complex.

The protein resides in the cytoplasm. In terms of biological role, the UvrABC repair system catalyzes the recognition and processing of DNA lesions. UvrC both incises the 5' and 3' sides of the lesion. The N-terminal half is responsible for the 3' incision and the C-terminal half is responsible for the 5' incision. The polypeptide is UvrABC system protein C (Hyphomonas neptunium (strain ATCC 15444)).